A 248-amino-acid chain; its full sequence is Pyridoxine 5'-phosphate synthase (248 aa).

Asn-12 contributes to the 3-amino-2-oxopropyl phosphate binding site. Residue 14 to 15 (DH) participates in 1-deoxy-D-xylulose 5-phosphate binding. Arg-23 contacts 3-amino-2-oxopropyl phosphate. His-48 serves as the catalytic Proton acceptor. 1-deoxy-D-xylulose 5-phosphate-binding residues include Arg-50 and His-55. The active-site Proton acceptor is Glu-75. Thr-105 serves as a coordination point for 1-deoxy-D-xylulose 5-phosphate. The active-site Proton donor is the His-196. 3-amino-2-oxopropyl phosphate-binding positions include Gly-197 and 218–219 (GH).

It belongs to the PNP synthase family. Homooctamer; tetramer of dimers.

Its subcellular location is the cytoplasm. It carries out the reaction 3-amino-2-oxopropyl phosphate + 1-deoxy-D-xylulose 5-phosphate = pyridoxine 5'-phosphate + phosphate + 2 H2O + H(+). It functions in the pathway cofactor biosynthesis; pyridoxine 5'-phosphate biosynthesis; pyridoxine 5'-phosphate from D-erythrose 4-phosphate: step 5/5. Catalyzes the complicated ring closure reaction between the two acyclic compounds 1-deoxy-D-xylulose-5-phosphate (DXP) and 3-amino-2-oxopropyl phosphate (1-amino-acetone-3-phosphate or AAP) to form pyridoxine 5'-phosphate (PNP) and inorganic phosphate. The polypeptide is Pyridoxine 5'-phosphate synthase (Pseudomonas aeruginosa (strain LESB58)).